Here is a 478-residue protein sequence, read N- to C-terminus: Serine/threonine-protein phosphatase 2A activator 1 (478 aa).

The tract at residues 359–478 is disordered; sequence DPSAIPPPSR…DITTKAPWAK (120 aa). Residues 396–419 show a composition bias toward low complexity; it reads APWATASQSTPPPSTGTAAPWATS.

The protein belongs to the PTPA-type PPIase family.

Its subcellular location is the cytoplasm. It localises to the nucleus. It catalyses the reaction [protein]-peptidylproline (omega=180) = [protein]-peptidylproline (omega=0). In terms of biological role, PPIases accelerate the folding of proteins. It catalyzes the cis-trans isomerization of proline imidic peptide bonds in oligopeptides. Acts as a regulatory subunit for PP2A-like phosphatases modulating their activity or substrate specificity, probably by inducing a conformational change in the catalytic subunit, a direct target of the PPIase. Can reactivate inactive phosphatase PP2A-phosphatase methylesterase complexes (PP2Ai) in presence of ATP and Mg(2+) by dissociating the inactive form from the complex. In Aspergillus oryzae (strain ATCC 42149 / RIB 40) (Yellow koji mold), this protein is Serine/threonine-protein phosphatase 2A activator 1 (rrd1).